Here is an 881-residue protein sequence, read N- to C-terminus: Probable inorganic carbon transporter subunit DabA (881 aa).

Residues C399, D401, H585, and C600 each contribute to the Zn(2+) site.

This sequence belongs to the inorganic carbon transporter (TC 9.A.2) DabA family. As to quaternary structure, forms a complex with DabB. Requires Zn(2+) as cofactor.

Its subcellular location is the cell membrane. Part of an energy-coupled inorganic carbon pump. The protein is Probable inorganic carbon transporter subunit DabA of Geobacillus sp. (strain WCH70).